Here is a 183-residue protein sequence, read N- to C-terminus: Ribosome-binding factor A (183 aa).

Positions 132-183 are disordered; sequence PAGEADPYRDNGSVAQSPAPGGLGIRTSDGPEAVEAPLTCGGDTGDDDRPKE.

The protein belongs to the RbfA family. As to quaternary structure, monomer. Binds 30S ribosomal subunits, but not 50S ribosomal subunits or 70S ribosomes.

The protein resides in the cytoplasm. In terms of biological role, one of several proteins that assist in the late maturation steps of the functional core of the 30S ribosomal subunit. Associates with free 30S ribosomal subunits (but not with 30S subunits that are part of 70S ribosomes or polysomes). Required for efficient processing of 16S rRNA. May interact with the 5'-terminal helix region of 16S rRNA. This Mycobacterium tuberculosis (strain ATCC 25177 / H37Ra) protein is Ribosome-binding factor A.